The sequence spans 277 residues: Inositol monophosphatase 1 (277 aa).

4 residues coordinate Mg(2+): E70, D90, I92, and D93. A substrate-binding site is contributed by E70. Substrate is bound at residue 92–95; sequence IDGT. Phosphothreonine is present on T168. Substrate is bound by residues 194 to 196, E213, and D220; that span reads GTA. D220 provides a ligand contact to Mg(2+).

Belongs to the inositol monophosphatase superfamily. Homodimer. Requires Mg(2+) as cofactor.

The protein resides in the cytoplasm. The catalysed reaction is a myo-inositol phosphate + H2O = myo-inositol + phosphate. It catalyses the reaction 1D-myo-inositol 1-phosphate + H2O = myo-inositol + phosphate. It carries out the reaction 1D-myo-inositol 2-phosphate + H2O = myo-inositol + phosphate. The enzyme catalyses 1D-myo-inositol 3-phosphate + H2O = myo-inositol + phosphate. The catalysed reaction is 1D-myo-inositol 4-phosphate + H2O = myo-inositol + phosphate. It catalyses the reaction 1D-myo-inositol 5-phosphate + H2O = myo-inositol + phosphate. It carries out the reaction 1D-myo-inositol 6-phosphate + H2O = myo-inositol + phosphate. The enzyme catalyses scyllo-inositol 1-phosphate + H2O = scyllo-inositol + phosphate. The catalysed reaction is alpha-D-galactose 1-phosphate + H2O = D-galactose + phosphate. It catalyses the reaction alpha-D-glucose 1-phosphate + H2O = D-glucose + phosphate. It carries out the reaction D-glucose 6-phosphate + H2O = D-glucose + phosphate. The enzyme catalyses beta-D-fructose 1-phosphate + H2O = D-fructose + phosphate. The catalysed reaction is glycerol 2-phosphate + H2O = glycerol + phosphate. It catalyses the reaction adenosine 2'-phosphate + H2O = adenosine + phosphate. Its pathway is polyol metabolism; myo-inositol biosynthesis; myo-inositol from D-glucose 6-phosphate: step 2/2. Its activity is regulated as follows. Inhibited by Li(+), Ca(2+) and Mn(2+), but also by Mg(2+) at concentrations above 3 mM. Its function is as follows. Phosphatase involved in the dephosphorylation of myo-inositol monophosphate to generate myo-inositol. Is also able to dephosphorylate scyllo-inositol-phosphate, myo-inositol 1,4-diphosphate, scyllo-inositol-1,3-diphosphate and scyllo-inositol-1,4-diphosphate. Also dephosphorylates in vitro other sugar-phosphates including D-galactose-1-phosphate, glucose-1-phosphate, glucose-6-phosphate, fructose-1-phosphate, beta-glycerophosphate and 2'-AMP. Responsible for the provision of inositol required for synthesis of phosphatidylinositol and polyphosphoinositides, and involved in maintaining normal brain function. Has been implicated as the pharmacological target for lithium Li(+) action in brain. The polypeptide is Inositol monophosphatase 1 (IMPA1) (Sus scrofa (Pig)).